The primary structure comprises 180 residues: Probable DNA-directed RNA polymerase subunit delta (180 aa).

In terms of domain architecture, HTH HARE-type spans 14–81; it reads LSMIEVARAI…GHNVWALRSW (68 aa). The disordered stretch occupies residues 89-180; that stretch reads EEVNHPEDEE…HQDDLDDDDE (92 aa). Positions 115–163 are enriched in acidic residues; it reads DSDDDDIIDYDSDDPEDEDLDVDEEDTNEDDYSDDDLDDADDNELDDGI.

The protein belongs to the RpoE family. RNAP is composed of a core of 2 alpha, a beta and a beta' subunits. The core is associated with a delta subunit and one of several sigma factors.

Its function is as follows. Participates in both the initiation and recycling phases of transcription. In the presence of the delta subunit, RNAP displays an increased specificity of transcription, a decreased affinity for nucleic acids, and an increased efficiency of RNA synthesis because of enhanced recycling. This is Probable DNA-directed RNA polymerase subunit delta from Lactobacillus johnsonii (strain CNCM I-12250 / La1 / NCC 533).